An 89-amino-acid polypeptide reads, in one-letter code: Cytochrome b (89 aa).

The next 2 membrane-spanning stretches (helical) occupy residues 38-58 (FGPL…FLAM) and 82-89 (WLLRYMHA). Histidine 88 serves as a coordination point for heme b.

Belongs to the cytochrome b family. In terms of assembly, the main subunits of complex b-c1 are: cytochrome b, cytochrome c1 and the Rieske protein. It depends on heme b as a cofactor.

The protein localises to the mitochondrion inner membrane. Its function is as follows. Component of the ubiquinol-cytochrome c reductase complex (complex III or cytochrome b-c1 complex) that is part of the mitochondrial respiratory chain. The b-c1 complex mediates electron transfer from ubiquinol to cytochrome c. Contributes to the generation of a proton gradient across the mitochondrial membrane that is then used for ATP synthesis. This chain is Cytochrome b (MT-CYB), found in Brassica napus (Rape).